Here is a 172-residue protein sequence, read N- to C-terminus: Ribosome maturation factor RimM (172 aa).

The PRC barrel domain maps to 96–168; sequence EGEFYYHQII…RVDVELMEGL (73 aa).

Belongs to the RimM family. Binds ribosomal protein uS19.

It is found in the cytoplasm. An accessory protein needed during the final step in the assembly of 30S ribosomal subunit, possibly for assembly of the head region. Essential for efficient processing of 16S rRNA. May be needed both before and after RbfA during the maturation of 16S rRNA. It has affinity for free ribosomal 30S subunits but not for 70S ribosomes. The protein is Ribosome maturation factor RimM of Streptococcus pyogenes serotype M28 (strain MGAS6180).